The primary structure comprises 916 residues: Cadherin-4 (916 aa).

The first 20 residues, 1-20, serve as a signal peptide directing secretion; sequence MTAGAGVLLLLLSLSGALRA. Residues 21 to 169 constitute a propeptide that is removed on maturation; the sequence is HNEDLTTRET…NANGLRRRKR (149 aa). Positions 124–168 are disordered; it reads TSSPHSGHKPQKGKKVVALDPSPPPKDTLLPWPQHQNANGLRRRK. Residues 129 to 138 show a composition bias toward basic residues; it reads SGHKPQKGKK. Cadherin domains follow at residues 170–277, 278–392, 393–507, 508–613, and 614–724; these read DWVI…RPEF, INQV…PPEF, TAST…APYF, PSNH…DNAP, and ELLP…TIGA. The Extracellular portion of the chain corresponds to 170–734; sequence DWVIPPINVP…VAAAGLGTGA (565 aa). 6 N-linked (GlcNAc...) asparagine glycosylation sites follow: Asn-283, Asn-412, Asn-557, Asn-632, Asn-661, and Asn-702. The chain crosses the membrane as a helical span at residues 735–756; that stretch reads IVAILICILILLTMVLLFVMWM. Residues 757–916 are Cytoplasmic-facing; the sequence is KRREKERHTK…ADMYGGGEED (160 aa). The segment at 806–838 is disordered; sequence MGHVPSKAPGVRRVDERPVGAEPQYPIRPMVPH.

In terms of tissue distribution, expressed mainly in brain but also found in other tissues.

It localises to the cell membrane. Functionally, cadherins are calcium-dependent cell adhesion proteins. They preferentially interact with themselves in a homophilic manner in connecting cells; cadherins may thus contribute to the sorting of heterogeneous cell types. May play an important role in retinal development. This is Cadherin-4 (CDH4) from Homo sapiens (Human).